Here is a 225-residue protein sequence, read N- to C-terminus: Small ribosomal subunit protein uS3 (225 aa).

The KH type-2 domain occupies 38–106 (LRAFLRRKLS…DVALNIVEIR (69 aa)).

This sequence belongs to the universal ribosomal protein uS3 family. Part of the 30S ribosomal subunit. Forms a tight complex with proteins S10 and S14.

Binds the lower part of the 30S subunit head. Binds mRNA in the 70S ribosome, positioning it for translation. In Gluconobacter oxydans (strain 621H) (Gluconobacter suboxydans), this protein is Small ribosomal subunit protein uS3.